A 363-amino-acid polypeptide reads, in one-letter code: Molybdenum import ATP-binding protein ModC (363 aa).

The ABC transporter domain maps to 1–230 (MISARFSGRQ…PNLPLIHRPD (230 aa)). 31 to 38 (GPSGCGKT) serves as a coordination point for ATP. In terms of domain architecture, Mop spans 289–359 (DTTILNALPA…LKAMALSAPA (71 aa)).

The protein belongs to the ABC transporter superfamily. Molybdate importer (TC 3.A.1.8) family. The complex is composed of two ATP-binding proteins (ModC), two transmembrane proteins (ModB) and a solute-binding protein (ModA).

It is found in the cell inner membrane. The catalysed reaction is molybdate(out) + ATP + H2O = molybdate(in) + ADP + phosphate + H(+). Part of the ABC transporter complex ModABC involved in molybdenum import. Responsible for energy coupling to the transport system. The protein is Molybdenum import ATP-binding protein ModC of Rhodobacter capsulatus (Rhodopseudomonas capsulata).